The sequence spans 31 residues: Photosystem II reaction center protein T (31 aa).

The chain crosses the membrane as a helical span at residues 3–23; that stretch reads SFAYILILGLAIATLFFAIAF.

It belongs to the PsbT family. As to quaternary structure, PSII is composed of 1 copy each of membrane proteins PsbA, PsbB, PsbC, PsbD, PsbE, PsbF, PsbH, PsbI, PsbJ, PsbK, PsbL, PsbM, PsbT, PsbX, PsbY, PsbZ, Psb30/Ycf12, peripheral proteins PsbO, CyanoQ (PsbQ), PsbU, PsbV and a large number of cofactors. It forms dimeric complexes.

It is found in the cellular thylakoid membrane. Found at the monomer-monomer interface of the photosystem II (PS II) dimer, plays a role in assembly and dimerization of PSII. PSII is a light-driven water plastoquinone oxidoreductase, using light energy to abstract electrons from H(2)O, generating a proton gradient subsequently used for ATP formation. The chain is Photosystem II reaction center protein T from Synechococcus sp. (strain CC9311).